We begin with the raw amino-acid sequence, 242 residues long: Ribonuclease HII (242 aa).

In terms of domain architecture, RNase H type-2 spans 21 to 234; the sequence is KIIVGLDEAG…SKNLLKEIEE (214 aa). A divalent metal cation contacts are provided by D27, E28, and D128.

The protein belongs to the RNase HII family. The cofactor is Mn(2+). It depends on Mg(2+) as a cofactor.

It is found in the cytoplasm. It catalyses the reaction Endonucleolytic cleavage to 5'-phosphomonoester.. In terms of biological role, endonuclease that specifically degrades the RNA of RNA-DNA hybrids. In Methanococcus maripaludis (strain DSM 14266 / JCM 13030 / NBRC 101832 / S2 / LL), this protein is Ribonuclease HII.